A 475-amino-acid chain; its full sequence is Pentatricopeptide repeat-containing protein At1g29710, mitochondrial (475 aa).

The N-terminal 37 residues, 1-37, are a transit peptide targeting the mitochondrion; the sequence is MVRLWCGKLRLWKPYLALATQSRNSWFCSGGGAPSHH. PPR repeat units lie at residues 83 to 117, 118 to 148, 153 to 183, 184 to 218, 219 to 254, and 255 to 285; these read AQNVTIETFDSLCIQGNWREAVEVLDYLENKGYAM, DLIRLLGLAKLCGKPEALEAARVVHECIIAL, DVGARNAIIEMYSGCCSVDDALKVFEEMPEW, NSGTLCVMMRCFVNNGYGEEAIDLFTRFKEEGNKP, NGEIFNQVFSTCTLTGDVKEGSLQFQAMYREYGIVP, and SMEHYHSVTKMLATSGHLDEALNFVERMPME. Residues 350 to 380 are type E(+) motif; it reads YFYSTFRPVDSSHPQMNIIYETLMSLRSQLK. The tract at residues 381 to 475 is type DYW motif; sequence EMGYVPDTRY…NGVCRCNNLW (95 aa).

Belongs to the PPR family. PCMP-H subfamily.

Its subcellular location is the mitochondrion. This Arabidopsis thaliana (Mouse-ear cress) protein is Pentatricopeptide repeat-containing protein At1g29710, mitochondrial (PCMP-H67).